The following is a 195-amino-acid chain: Holliday junction branch migration complex subunit RuvA (195 aa).

The tract at residues 1–66 (MNYLVFKVIY…LIIKDLYGFR (66 aa)) is domain I. Residues 67–141 (TYNERLLFID…KYINKVSEKN (75 aa)) form a domain II region. Residue asparagine 141 is a region of interest, flexible linker. The domain III stretch occupies residues 141 to 195 (NPWAKELSIGLENLGYDKKDIEYAITKVKVDTQQNIDISEIIGCAIKEISLRHEN).

The protein belongs to the RuvA family. In terms of assembly, homotetramer. Forms an RuvA(8)-RuvB(12)-Holliday junction (HJ) complex. HJ DNA is sandwiched between 2 RuvA tetramers; dsDNA enters through RuvA and exits via RuvB. An RuvB hexamer assembles on each DNA strand where it exits the tetramer. Each RuvB hexamer is contacted by two RuvA subunits (via domain III) on 2 adjacent RuvB subunits; this complex drives branch migration. In the full resolvosome a probable DNA-RuvA(4)-RuvB(12)-RuvC(2) complex forms which resolves the HJ.

The protein resides in the cytoplasm. In terms of biological role, the RuvA-RuvB-RuvC complex processes Holliday junction (HJ) DNA during genetic recombination and DNA repair, while the RuvA-RuvB complex plays an important role in the rescue of blocked DNA replication forks via replication fork reversal (RFR). RuvA specifically binds to HJ cruciform DNA, conferring on it an open structure. The RuvB hexamer acts as an ATP-dependent pump, pulling dsDNA into and through the RuvAB complex. HJ branch migration allows RuvC to scan DNA until it finds its consensus sequence, where it cleaves and resolves the cruciform DNA. This chain is Holliday junction branch migration complex subunit RuvA, found in Ureaplasma urealyticum serovar 10 (strain ATCC 33699 / Western).